The chain runs to 368 residues: Propane 2-monooxygenase, hydroxylase component small subunit (368 aa).

It belongs to the TmoE/XamoE family. As to quaternary structure, the propane 2-monooxygenase multicomponent enzyme system is composed of an electron transfer component and a monooxygenase component interacting with the effector protein PrmD. The electron transfer component is composed of a reductase (PrmB), and the monooxygenase component is formed by a large subunit (PrmA) and a small subunit (PrmC). Probably requires the presence of the chaperonin-like protein PrmG to ensure a productive folding, resulting of a soluble PrmC, which leads to the active form of PrmABCD.

The enzyme catalyses propane + NADH + O2 + H(+) = propan-2-ol + NAD(+) + H2O. Its function is as follows. Component of the propane 2-monooxygenase multicomponent enzyme system which is involved in the degradation of propane via the O2-dependent hydroxylation of propane. Also able to catalyze the oxidation the water contaminant N-nitrosodimethylamine (NDMA). This chain is Propane 2-monooxygenase, hydroxylase component small subunit, found in Rhodococcus jostii (strain RHA1).